Here is a 512-residue protein sequence, read N- to C-terminus: Mannose-1-phosphate guanylyltransferase (512 aa).

Belongs to the mannose-6-phosphate isomerase type 2 family.

It catalyses the reaction alpha-D-mannose 1-phosphate + GTP + H(+) = GDP-alpha-D-mannose + diphosphate. The polypeptide is Mannose-1-phosphate guanylyltransferase (noeJ) (Sinorhizobium fredii (strain NBRC 101917 / NGR234)).